A 609-amino-acid chain; its full sequence is Proline--tRNA ligase (609 aa).

The protein belongs to the class-II aminoacyl-tRNA synthetase family. ProS type 1 subfamily. In terms of assembly, homodimer.

Its subcellular location is the cytoplasm. It carries out the reaction tRNA(Pro) + L-proline + ATP = L-prolyl-tRNA(Pro) + AMP + diphosphate. Its function is as follows. Catalyzes the attachment of proline to tRNA(Pro) in a two-step reaction: proline is first activated by ATP to form Pro-AMP and then transferred to the acceptor end of tRNA(Pro). As ProRS can inadvertently accommodate and process non-cognate amino acids such as alanine and cysteine, to avoid such errors it has two additional distinct editing activities against alanine. One activity is designated as 'pretransfer' editing and involves the tRNA(Pro)-independent hydrolysis of activated Ala-AMP. The other activity is designated 'posttransfer' editing and involves deacylation of mischarged Ala-tRNA(Pro). The misacylated Cys-tRNA(Pro) is not edited by ProRS. The chain is Proline--tRNA ligase from Synechococcus sp. (strain JA-3-3Ab) (Cyanobacteria bacterium Yellowstone A-Prime).